The chain runs to 122 residues: MIQMQTNLDVADNSGARRVQCIKVLGGSHRRYASVGDIIVVSVKEAIPRGRVKKGDVRKAVVVRTAKEVRREDGTTIRFDRNAAVILNNQGEPVGTRIFGPVVRELRAKNFMKIISLAPEVL.

The protein belongs to the universal ribosomal protein uL14 family. Part of the 50S ribosomal subunit. Forms a cluster with proteins L3 and L19. In the 70S ribosome, L14 and L19 interact and together make contacts with the 16S rRNA in bridges B5 and B8.

Functionally, binds to 23S rRNA. Forms part of two intersubunit bridges in the 70S ribosome. This is Large ribosomal subunit protein uL14 from Cereibacter sphaeroides (strain ATCC 17029 / ATH 2.4.9) (Rhodobacter sphaeroides).